Here is a 232-residue protein sequence, read N- to C-terminus: Ribose-5-phosphate isomerase A (232 aa).

Substrate contacts are provided by residues 29–32 (TGST), 84–87 (DGAD), and 97–100 (KGGG). The Proton acceptor role is filled by Glu106. Position 124 (Lys124) interacts with substrate.

Belongs to the ribose 5-phosphate isomerase family. As to quaternary structure, homodimer.

It carries out the reaction aldehydo-D-ribose 5-phosphate = D-ribulose 5-phosphate. It functions in the pathway carbohydrate degradation; pentose phosphate pathway; D-ribose 5-phosphate from D-ribulose 5-phosphate (non-oxidative stage): step 1/1. Functionally, catalyzes the reversible conversion of ribose-5-phosphate to ribulose 5-phosphate. This chain is Ribose-5-phosphate isomerase A, found in Brucella suis biovar 1 (strain 1330).